A 134-amino-acid chain; its full sequence is Fluoride-specific ion channel FluC 3 (134 aa).

A run of 4 helical transmembrane segments spans residues leucine 4 to leucine 24, methionine 35 to phenylalanine 55, methionine 67 to valine 87, and isoleucine 100 to isoleucine 120. Na(+) contacts are provided by glycine 74 and serine 77.

Belongs to the fluoride channel Fluc/FEX (TC 1.A.43) family.

The protein resides in the cell inner membrane. It catalyses the reaction fluoride(in) = fluoride(out). Na(+) is not transported, but it plays an essential structural role and its presence is essential for fluoride channel function. Fluoride-specific ion channel. Important for reducing fluoride concentration in the cell, thus reducing its toxicity. The sequence is that of Fluoride-specific ion channel FluC 3 from Yersinia pseudotuberculosis serotype I (strain IP32953).